We begin with the raw amino-acid sequence, 190 residues long: MSVSNVFFVGLMGAGKTTVGRAVARRLDLPFFDSDHEIEARCGVRVPVIFEHEGEMGFRDRETQMIDELTARHGVVVATGGGAVLRPENRAFLRERGTVIYLRANPHDLYLRTRHDKNRPLLQTENPRARLEELHAIRDPLYREVAHFVIETGKPTVAQLVNMVLMQLEVAGIVVPPAASSPTSQVSRQS.

Residue 13-18 (GAGKTT) coordinates ATP. A Mg(2+)-binding site is contributed by Thr17. Residues Asp35, Arg59, and Gly81 each contribute to the substrate site. Arg119 lines the ATP pocket. Arg138 contacts substrate.

It belongs to the shikimate kinase family. Monomer. Requires Mg(2+) as cofactor.

It is found in the cytoplasm. It carries out the reaction shikimate + ATP = 3-phosphoshikimate + ADP + H(+). It functions in the pathway metabolic intermediate biosynthesis; chorismate biosynthesis; chorismate from D-erythrose 4-phosphate and phosphoenolpyruvate: step 5/7. Catalyzes the specific phosphorylation of the 3-hydroxyl group of shikimic acid using ATP as a cosubstrate. The polypeptide is Shikimate kinase (Ralstonia nicotianae (strain ATCC BAA-1114 / GMI1000) (Ralstonia solanacearum)).